Consider the following 127-residue polypeptide: Fumarate reductase subunit C (127 aa).

The next 3 membrane-spanning stretches (helical) occupy residues 30-50 (ATVL…GCLV), 58-78 (GWLA…ALLG), and 107-127 (IIVL…LIVV).

Belongs to the FrdC family. In terms of assembly, part of an enzyme complex containing four subunits: a flavoprotein (FrdA), an iron-sulfur protein (FrdB), and two hydrophobic anchor proteins (FrdC and FrdD).

It localises to the cell inner membrane. Its function is as follows. Anchors the catalytic components of the fumarate reductase complex to the cell membrane, binds quinones. This is Fumarate reductase subunit C from Vibrio parahaemolyticus serotype O3:K6 (strain RIMD 2210633).